The following is a 265-amino-acid chain: tRNA pseudouridine synthase A (265 aa).

The active-site Nucleophile is the Asp58. Tyr116 is a substrate binding site.

Belongs to the tRNA pseudouridine synthase TruA family. As to quaternary structure, homodimer.

It carries out the reaction uridine(38/39/40) in tRNA = pseudouridine(38/39/40) in tRNA. Formation of pseudouridine at positions 38, 39 and 40 in the anticodon stem and loop of transfer RNAs. The protein is tRNA pseudouridine synthase A of Neisseria meningitidis serogroup B (strain ATCC BAA-335 / MC58).